A 376-amino-acid chain; its full sequence is UDP-N-acetylglucosamine--N-acetylmuramyl-(pentapeptide) pyrophosphoryl-undecaprenol N-acetylglucosamine transferase (376 aa).

Residues 11–13 (TGG), Asn-117, Arg-160, Ser-208, and Gln-310 each bind UDP-N-acetyl-alpha-D-glucosamine.

The protein belongs to the glycosyltransferase 28 family. MurG subfamily.

It is found in the cell inner membrane. It catalyses the reaction di-trans,octa-cis-undecaprenyl diphospho-N-acetyl-alpha-D-muramoyl-L-alanyl-D-glutamyl-meso-2,6-diaminopimeloyl-D-alanyl-D-alanine + UDP-N-acetyl-alpha-D-glucosamine = di-trans,octa-cis-undecaprenyl diphospho-[N-acetyl-alpha-D-glucosaminyl-(1-&gt;4)]-N-acetyl-alpha-D-muramoyl-L-alanyl-D-glutamyl-meso-2,6-diaminopimeloyl-D-alanyl-D-alanine + UDP + H(+). The protein operates within cell wall biogenesis; peptidoglycan biosynthesis. Cell wall formation. Catalyzes the transfer of a GlcNAc subunit on undecaprenyl-pyrophosphoryl-MurNAc-pentapeptide (lipid intermediate I) to form undecaprenyl-pyrophosphoryl-MurNAc-(pentapeptide)GlcNAc (lipid intermediate II). The polypeptide is UDP-N-acetylglucosamine--N-acetylmuramyl-(pentapeptide) pyrophosphoryl-undecaprenol N-acetylglucosamine transferase (Rickettsia massiliae (strain Mtu5)).